Consider the following 263-residue polypeptide: uncharacterized protein (263 aa).

Position 31–38 (31–38 (GPTGSGKT)) interacts with ATP.

The protein belongs to the CbbQ/NirQ/NorQ/GpvN family.

This is an uncharacterized protein from Staphylococcus aureus (strain bovine RF122 / ET3-1).